The primary structure comprises 352 residues: S-adenosylmethionine:tRNA ribosyltransferase-isomerase (352 aa).

It belongs to the QueA family. In terms of assembly, monomer.

It localises to the cytoplasm. The catalysed reaction is 7-aminomethyl-7-carbaguanosine(34) in tRNA + S-adenosyl-L-methionine = epoxyqueuosine(34) in tRNA + adenine + L-methionine + 2 H(+). It functions in the pathway tRNA modification; tRNA-queuosine biosynthesis. Functionally, transfers and isomerizes the ribose moiety from AdoMet to the 7-aminomethyl group of 7-deazaguanine (preQ1-tRNA) to give epoxyqueuosine (oQ-tRNA). The protein is S-adenosylmethionine:tRNA ribosyltransferase-isomerase of Gloeobacter violaceus (strain ATCC 29082 / PCC 7421).